The sequence spans 112 residues: B3 domain-containing protein At1g43171 (112 aa).

Positions 19 to 112 (DIVGNVALPK…FENKFIVLNF (94 aa)) form a DNA-binding region, TF-B3.

The protein localises to the nucleus. The protein is B3 domain-containing protein At1g43171 of Arabidopsis thaliana (Mouse-ear cress).